Consider the following 736-residue polypeptide: Elongation factor 2 (736 aa).

A tr-type G domain is found at Thr-18–Lys-234. Residues Ala-27–Thr-34, Asp-93–His-97, and Asn-147–Asp-150 contribute to the GTP site. His-603 bears the Diphthamide mark.

Belongs to the TRAFAC class translation factor GTPase superfamily. Classic translation factor GTPase family. EF-G/EF-2 subfamily.

It is found in the cytoplasm. Its function is as follows. Catalyzes the GTP-dependent ribosomal translocation step during translation elongation. During this step, the ribosome changes from the pre-translocational (PRE) to the post-translocational (POST) state as the newly formed A-site-bound peptidyl-tRNA and P-site-bound deacylated tRNA move to the P and E sites, respectively. Catalyzes the coordinated movement of the two tRNA molecules, the mRNA and conformational changes in the ribosome. This chain is Elongation factor 2 (fusA), found in Saccharolobus solfataricus (strain ATCC 35092 / DSM 1617 / JCM 11322 / P2) (Sulfolobus solfataricus).